The primary structure comprises 389 residues: Probable L-tyrosine/L-aspartate decarboxylase (389 aa).

N6-(pyridoxal phosphate)lysine is present on K233.

It belongs to the group II decarboxylase family. MfnA subfamily. Pyridoxal 5'-phosphate serves as cofactor.

The catalysed reaction is L-tyrosine + H(+) = tyramine + CO2. It catalyses the reaction L-aspartate + H(+) = beta-alanine + CO2. It functions in the pathway cofactor biosynthesis; methanofuran biosynthesis. It participates in cofactor biosynthesis; coenzyme A biosynthesis. Catalyzes the decarboxylation of L-tyrosine to produce tyramine for methanofuran biosynthesis. Can also catalyze the decarboxylation of L-aspartate to produce beta-alanine for coenzyme A (CoA) biosynthesis. This is Probable L-tyrosine/L-aspartate decarboxylase from Methanosphaera stadtmanae (strain ATCC 43021 / DSM 3091 / JCM 11832 / MCB-3).